Here is a 92-residue protein sequence, read N- to C-terminus: Large ribosomal subunit protein uL24 (92 aa).

It belongs to the universal ribosomal protein uL24 family. Part of the 50S ribosomal subunit.

Its function is as follows. One of two assembly initiator proteins, it binds directly to the 5'-end of the 23S rRNA, where it nucleates assembly of the 50S subunit. One of the proteins that surrounds the polypeptide exit tunnel on the outside of the subunit. This is Large ribosomal subunit protein uL24 from Opitutus terrae (strain DSM 11246 / JCM 15787 / PB90-1).